Reading from the N-terminus, the 142-residue chain is MAQKAVEKSEEEWKKVLTPEQYHVLRQKGTERPFSGNLYYNKEKGVYTCAACGQELFSSDTKFESGTGWPSFYDVISSDRVRLKEDTSYFMNRIEVVCSRCGSHLGHVFEDGPAPTGKRYCINSVSLNFKTEEEGKQGEERM.

The MsrB domain maps to 10-132 (EEEWKKVLTP…NSVSLNFKTE (123 aa)). Residues Cys49, Cys52, Cys98, and Cys101 each contribute to the Zn(2+) site. The active-site Nucleophile is Cys121.

This sequence belongs to the MsrB Met sulfoxide reductase family. Zn(2+) is required as a cofactor.

The enzyme catalyses L-methionyl-[protein] + [thioredoxin]-disulfide + H2O = L-methionyl-(R)-S-oxide-[protein] + [thioredoxin]-dithiol. This Methanosarcina barkeri (strain Fusaro / DSM 804) protein is Peptide methionine sulfoxide reductase MsrB.